The following is an 859-amino-acid chain: Glucans biosynthesis glucosyltransferase H (859 aa).

6 consecutive transmembrane segments (helical) span residues 144 to 166, 200 to 222, 523 to 545, 573 to 595, 608 to 630, and 684 to 706; these read YILL…GILP, LLLF…MGFL, VMSY…LLAV, VALF…ILIW, VTVS…MLFH, and SFLW…SVIS.

The protein belongs to the glycosyltransferase 2 family. OpgH subfamily.

It is found in the cell inner membrane. Its pathway is glycan metabolism; osmoregulated periplasmic glucan (OPG) biosynthesis. Its function is as follows. Involved in the biosynthesis of osmoregulated periplasmic glucans (OPGs). This Pseudomonas syringae pv. tomato (strain ATCC BAA-871 / DC3000) protein is Glucans biosynthesis glucosyltransferase H.